An 840-amino-acid chain; its full sequence is DNA gyrase subunit A (840 aa).

The Topo IIA-type catalytic domain maps to 51-516 (LPDVRDGFKP…VSSHIDDEDL (466 aa)). Tyrosine 139 serves as the catalytic O-(5'-phospho-DNA)-tyrosine intermediate. Positions 543-549 (QRRGGVG) match the GyrA-box motif.

It belongs to the type II topoisomerase GyrA/ParC subunit family. In terms of assembly, heterotetramer, composed of two GyrA and two GyrB chains. In the heterotetramer, GyrA contains the active site tyrosine that forms a transient covalent intermediate with DNA, while GyrB binds cofactors and catalyzes ATP hydrolysis.

Its subcellular location is the cytoplasm. The enzyme catalyses ATP-dependent breakage, passage and rejoining of double-stranded DNA.. A type II topoisomerase that negatively supercoils closed circular double-stranded (ds) DNA in an ATP-dependent manner to modulate DNA topology and maintain chromosomes in an underwound state. Negative supercoiling favors strand separation, and DNA replication, transcription, recombination and repair, all of which involve strand separation. Also able to catalyze the interconversion of other topological isomers of dsDNA rings, including catenanes and knotted rings. Type II topoisomerases break and join 2 DNA strands simultaneously in an ATP-dependent manner. The chain is DNA gyrase subunit A from Ureaplasma parvum serovar 3 (strain ATCC 700970).